Consider the following 123-residue polypeptide: Large ribosomal subunit protein uL14 (123 aa).

Belongs to the universal ribosomal protein uL14 family. As to quaternary structure, part of the 50S ribosomal subunit. Forms a cluster with proteins L3 and L19. In the 70S ribosome, L14 and L19 interact and together make contacts with the 16S rRNA in bridges B5 and B8.

Functionally, binds to 23S rRNA. Forms part of two intersubunit bridges in the 70S ribosome. The sequence is that of Large ribosomal subunit protein uL14 from Buchnera aphidicola subsp. Cinara cedri (strain Cc).